We begin with the raw amino-acid sequence, 352 residues long: Maleylacetate reductase (352 aa).

Residues 93 to 94 and 115 to 119 contribute to the NAD(+) site; these read GS and TTYAG.

The protein belongs to the iron-containing alcohol dehydrogenase family. The maleylacetate reductase family of enzymes does not require any metal ion for activity, despite being related to the family III metal-dependent polyol dehydrogenases. serves as cofactor.

It catalyses the reaction 3-oxoadipate + NAD(+) = maleylacetate + NADH + H(+). It participates in xenobiotic degradation; gamma-hexachlorocyclohexane degradation. Its function is as follows. Catalyzes the NADH-dependent reduction of maleylacetate to beta-ketoadipate, a step in the degradation of gamma-hexachlorocyclohexane (gamma-HCH or lindane). Has an essential role in this assimilation pathway that allows S.japonicum UT26 to grow on gamma-HCH as the sole source of carbon and energy. The polypeptide is Maleylacetate reductase (Sphingobium indicum (strain DSM 16413 / CCM 7287 / MTCC 6362 / UT26 / NBRC 101211 / UT26S) (Sphingobium japonicum)).